The chain runs to 393 residues: Flavohemoprotein (393 aa).

The region spanning 1–139 (MLSAEHRAIV…LADLLIGLEE (139 aa)) is the Globin domain. Histidine 85 is a binding site for heme b. Active-site charge relay system residues include tyrosine 95 and glutamate 138. A reductase region spans residues 150 to 393 (GGWRGTRAFV…EFFGPASALD (244 aa)). Residues 153 to 256 (RGTRAFVVAR…LTPSGDFTLE (104 aa)) form the FAD-binding FR-type domain. FAD is bound by residues tyrosine 191 and 205–208 (RNYS). 268-273 (GVGITP) contributes to the NADP(+) binding site. 385-388 (FFGP) contacts FAD.

It belongs to the globin family. Two-domain flavohemoproteins subfamily. This sequence in the C-terminal section; belongs to the flavoprotein pyridine nucleotide cytochrome reductase family. It depends on heme b as a cofactor. Requires FAD as cofactor.

It carries out the reaction 2 nitric oxide + NADPH + 2 O2 = 2 nitrate + NADP(+) + H(+). The catalysed reaction is 2 nitric oxide + NADH + 2 O2 = 2 nitrate + NAD(+) + H(+). Functionally, is involved in NO detoxification in an aerobic process, termed nitric oxide dioxygenase (NOD) reaction that utilizes O(2) and NAD(P)H to convert NO to nitrate, which protects the bacterium from various noxious nitrogen compounds. Therefore, plays a central role in the inducible response to nitrosative stress. This Burkholderia sp. (strain TH2) protein is Flavohemoprotein.